The sequence spans 274 residues: Formamidopyrimidine-DNA glycosylase (274 aa).

Proline 2 functions as the Schiff-base intermediate with DNA in the catalytic mechanism. Glutamate 3 functions as the Proton donor in the catalytic mechanism. Lysine 57 acts as the Proton donor; for beta-elimination activity in catalysis. The DNA site is built by histidine 90, arginine 109, and lysine 150. The FPG-type zinc-finger motif lies at 235–269 (FVYGRKDKACLICGHTIESIKQGQRSTFFCRHCQH). The Proton donor; for delta-elimination activity role is filled by arginine 259.

This sequence belongs to the FPG family. As to quaternary structure, monomer. Requires Zn(2+) as cofactor.

The catalysed reaction is Hydrolysis of DNA containing ring-opened 7-methylguanine residues, releasing 2,6-diamino-4-hydroxy-5-(N-methyl)formamidopyrimidine.. It catalyses the reaction 2'-deoxyribonucleotide-(2'-deoxyribose 5'-phosphate)-2'-deoxyribonucleotide-DNA = a 3'-end 2'-deoxyribonucleotide-(2,3-dehydro-2,3-deoxyribose 5'-phosphate)-DNA + a 5'-end 5'-phospho-2'-deoxyribonucleoside-DNA + H(+). In terms of biological role, involved in base excision repair of DNA damaged by oxidation or by mutagenic agents. Acts as a DNA glycosylase that recognizes and removes damaged bases. Has a preference for oxidized purines, such as 7,8-dihydro-8-oxoguanine (8-oxoG). Has AP (apurinic/apyrimidinic) lyase activity and introduces nicks in the DNA strand. Cleaves the DNA backbone by beta-delta elimination to generate a single-strand break at the site of the removed base with both 3'- and 5'-phosphates. The chain is Formamidopyrimidine-DNA glycosylase from Proteus mirabilis (strain HI4320).